A 298-amino-acid chain; its full sequence is HTH-type transcriptional regulator ArgP (298 aa).

Positions Leu-4–Thr-60 constitute an HTH lysR-type domain. Positions Phe-21 to Lys-40 form a DNA-binding region, H-T-H motif.

Belongs to the LysR transcriptional regulatory family. Homodimer.

Its function is as follows. Controls the transcription of genes involved in arginine and lysine metabolism. The protein is HTH-type transcriptional regulator ArgP of Vibrio vulnificus (strain YJ016).